The chain runs to 547 residues: uncharacterized protein (547 aa).

Positions 1-37 (MSAASSAIPKRSDPRLLDQKKSAKSTLPKNTPENGVS) are disordered. Basic and acidic residues predominate over residues 10-21 (KRSDPRLLDQKK). A compositionally biased stretch (polar residues) spans 24-37 (KSTLPKNTPENGVS). C3H1-type zinc fingers lie at residues 41–67 (NLQHVPCKFFRNGTCTAGENCPFSHSL) and 68–95 (ETERPICKYFLKGNCKFGPKCALSHALP). The tract at residues 132–176 (SPSLSSKTMKNPADKANNTTATDVRGNTATSPYFPFSRSPGRHSG) is disordered. Residues 147–162 (ANNTTATDVRGNTATS) show a composition bias toward polar residues. Ser-343 bears the Phosphoserine mark. Phosphotyrosine is present on Tyr-344. Ser-353, Ser-355, Ser-483, Ser-489, Ser-495, and Ser-499 each carry phosphoserine. Thr-502 bears the Phosphothreonine mark. Polar residues predominate over residues 526-536 (VANSSPPWNST). The segment at 526-547 (VANSSPPWNSTVEEETPFQMDD) is disordered. Positions 537–547 (VEEETPFQMDD) are enriched in acidic residues.

This is an uncharacterized protein from Schizosaccharomyces pombe (strain 972 / ATCC 24843) (Fission yeast).